A 378-amino-acid polypeptide reads, in one-letter code: Transmembrane 6 superfamily member 2 (378 aa).

Transmembrane regions (helical) follow at residues 34–54 (LCVV…VYSL), 63–83 (PLYA…VIAL), 110–130 (IFIC…MAGA), 140–160 (LGLY…PGNI), 170–190 (PTFF…MRIF), 219–239 (LTLI…GLVV), 269–289 (MLMY…ALTF), 291–311 (GCSW…QAQF), and 332–352 (TWAT…LLAL). EXPERA domains are found at residues 61–186 (YDPL…CWAG) and 217–351 (ADLT…HLLA).

This sequence belongs to the TM6SF family.

The protein localises to the endoplasmic reticulum membrane. Its subcellular location is the endoplasmic reticulum-Golgi intermediate compartment membrane. Regulator of liver fat metabolism influencing triglyceride secretion and hepatic lipid droplet content. May function as sterol isomerase. The chain is Transmembrane 6 superfamily member 2 (Tm6sf2) from Rattus norvegicus (Rat).